A 38-amino-acid chain; its full sequence is Large ribosomal subunit protein bL36 (38 aa).

This sequence belongs to the bacterial ribosomal protein bL36 family.

The polypeptide is Large ribosomal subunit protein bL36 (Psychrobacter arcticus (strain DSM 17307 / VKM B-2377 / 273-4)).